The sequence spans 215 residues: Ribose-5-phosphate isomerase A (215 aa).

Residues 26-29, 79-82, and 92-95 each bind substrate; these read TGST, DGAD, and KGGG. Glu-101 acts as the Proton acceptor in catalysis. Lys-119 contacts substrate.

It belongs to the ribose 5-phosphate isomerase family. As to quaternary structure, homodimer.

The catalysed reaction is aldehydo-D-ribose 5-phosphate = D-ribulose 5-phosphate. It functions in the pathway carbohydrate degradation; pentose phosphate pathway; D-ribose 5-phosphate from D-ribulose 5-phosphate (non-oxidative stage): step 1/1. Functionally, catalyzes the reversible conversion of ribose-5-phosphate to ribulose 5-phosphate. This chain is Ribose-5-phosphate isomerase A, found in Xanthomonas euvesicatoria pv. vesicatoria (strain 85-10) (Xanthomonas campestris pv. vesicatoria).